Here is a 478-residue protein sequence, read N- to C-terminus: ATP synthase subunit beta (478 aa).

Residue 164–171 (GGAGVGKT) participates in ATP binding.

The protein belongs to the ATPase alpha/beta chains family. F-type ATPases have 2 components, CF(1) - the catalytic core - and CF(0) - the membrane proton channel. CF(1) has five subunits: alpha(3), beta(3), gamma(1), delta(1), epsilon(1). CF(0) has three main subunits: a(1), b(2) and c(9-12). The alpha and beta chains form an alternating ring which encloses part of the gamma chain. CF(1) is attached to CF(0) by a central stalk formed by the gamma and epsilon chains, while a peripheral stalk is formed by the delta and b chains.

It is found in the cell membrane. It catalyses the reaction ATP + H2O + 4 H(+)(in) = ADP + phosphate + 5 H(+)(out). In terms of biological role, produces ATP from ADP in the presence of a proton gradient across the membrane. The catalytic sites are hosted primarily by the beta subunits. This is ATP synthase subunit beta from Corynebacterium kroppenstedtii (strain DSM 44385 / JCM 11950 / CIP 105744 / CCUG 35717).